Reading from the N-terminus, the 360-residue chain is Alpha-2-macroglobulin receptor-associated protein (360 aa).

The first 28 residues, 1–28 (MAPRRERVSTLPRLQLLVLLLLPLMLVP), serve as a signal peptide directing secretion. Phosphoserine is present on residues Ser53 and Ser138. Residues 184–302 (EKIQEYNVLL…KHNHYQKQLE (119 aa)) adopt a coiled-coil conformation. Residues 240 to 356 (RLRKVSHQGY…DLSSRVSRAR (117 aa)) form an LDL receptor binding region. N-linked (GlcNAc...) asparagine glycosylation occurs at Asn271. A Prevents secretion from ER motif is present at residues 357–360 (HNEL).

This sequence belongs to the alpha-2-MRAP family. As to quaternary structure, interacts with the LRP1/alpha-2-macroglobulin receptor heavy and light chains; the interaction is transient and coincides with a reduction of ligand binding by the receptor. Interacts with LRP2/glycoprotein 330. Interacts with LRP1B; binding is followed by internalization and degradation. Interacts with LDLR. Interacts with SORL1. Interacts with LRP1; this interaction is followed by rapid internalization. N-glycosylated. Highly expressed in PYS-2 parietal endoderm cells and in the kidney. The RNA level increased about 10-fold during differentiation of F9 embryonal carcinoma cells to parietal endoderm cells.

The protein resides in the rough endoplasmic reticulum lumen. Its subcellular location is the endoplasmic reticulum-Golgi intermediate compartment lumen. It is found in the golgi apparatus. It localises to the cis-Golgi network. The protein localises to the golgi apparatus lumen. The protein resides in the endosome lumen. Its subcellular location is the cell surface. Molecular chaperone for LDL receptor-related proteins that may regulate their ligand binding activity along the secretory pathway. In Mus musculus (Mouse), this protein is Alpha-2-macroglobulin receptor-associated protein (Lrpap1).